A 182-amino-acid polypeptide reads, in one-letter code: Sec-independent protein translocase protein TatB (182 aa).

Residues 1–21 (MFDIGFSELLLVFVIGLIVLG) form a helical membrane-spanning segment. Disordered regions lie at residues 88–107 (AAES…ASDE) and 121–182 (TQHE…SDKP). The segment covering 168–182 (AAPVVESSPSSSDKP) has biased composition (low complexity).

This sequence belongs to the TatB family. As to quaternary structure, the Tat system comprises two distinct complexes: a TatABC complex, containing multiple copies of TatA, TatB and TatC subunits, and a separate TatA complex, containing only TatA subunits. Substrates initially bind to the TatABC complex, which probably triggers association of the separate TatA complex to form the active translocon.

Its subcellular location is the cell inner membrane. Part of the twin-arginine translocation (Tat) system that transports large folded proteins containing a characteristic twin-arginine motif in their signal peptide across membranes. Together with TatC, TatB is part of a receptor directly interacting with Tat signal peptides. TatB may form an oligomeric binding site that transiently accommodates folded Tat precursor proteins before their translocation. The protein is Sec-independent protein translocase protein TatB of Salmonella typhi.